A 336-amino-acid polypeptide reads, in one-letter code: Neuropeptides B/W receptor type 2 (336 aa).

The disordered stretch occupies residues M1–L25. Residues M1–Y45 lie on the Extracellular side of the membrane. Positions S12 to L25 are enriched in low complexity. Residues N29 and N34 are each glycosylated (N-linked (GlcNAc...) asparagine). Residues V46–C68 form a helical membrane-spanning segment. The Cytoplasmic segment spans residues V69–T80. The chain crosses the membrane as a helical span at residues H81–A103. The Extracellular portion of the chain corresponds to E104–N127. A disulfide bridge connects residues C117 and C197. Residues I128 to V146 traverse the membrane as a helical segment. Topologically, residues L147–V165 are cytoplasmic. The helical transmembrane segment at A166 to Y188 threads the bilayer. Residues N189–R213 lie on the Extracellular side of the membrane. A helical membrane pass occupies residues I214–L236. The Cytoplasmic segment spans residues R237 to R256. Residues K257–A279 traverse the membrane as a helical segment. The Extracellular portion of the chain corresponds to S280–L293. Residues V294 to Y316 traverse the membrane as a helical segment. Residues A317 to A336 are Cytoplasmic-facing.

Belongs to the G-protein coupled receptor 1 family.

It is found in the cell membrane. Functionally, interacts specifically with a number of opioid ligands. Receptor for neuropeptides B and W, which may be involved in neuroendocrine system regulation, food intake and the organization of other signals. The polypeptide is Neuropeptides B/W receptor type 2 (NPBWR2) (Bos taurus (Bovine)).